Consider the following 431-residue polypeptide: Homeobox protein knotted-1-like 3 (431 aa).

Positions 15-47 (NHFTDQHQPPPPQPPPPPPQQQQHFQEAPPPNW) are disordered. Residues 22–34 (QPPPPQPPPPPPQ) show a composition bias toward pro residues. The ELK domain maps to 322–342 (ELKHELKQGYKEKIVDIREEI). The homeobox; TALE-type DNA-binding region spans 343-406 (LRKRRAGKLP…NQRKRNWHSN (64 aa)). Residues 402-431 (NWHSNPSSSTVLKNKRKSNAGDNSGRERFA) are disordered. Polar residues predominate over residues 404 to 413 (HSNPSSSTVL).

Belongs to the TALE/KNOX homeobox family. May form heterodimeric complex with the TALE/BELL proteins. Interacts with OFP1, OFP2, OFP4, OFP12 and OFP14. Interacts with KNATM-B.

Its subcellular location is the nucleus. The sequence is that of Homeobox protein knotted-1-like 3 (KNAT3) from Arabidopsis thaliana (Mouse-ear cress).